The primary structure comprises 734 residues: Polyphosphate kinase (734 aa).

N67 contributes to the ATP binding site. Residues R392 and R422 each coordinate Mg(2+). Residues T447–T481 enclose the PLD phosphodiesterase domain. Residue H452 is the Phosphohistidine intermediate of the active site. ATP-binding residues include Y485, R581, and H609. Residues K705 to R734 form a disordered region.

It belongs to the polyphosphate kinase 1 (PPK1) family. The cofactor is Mg(2+). Post-translationally, an intermediate of this reaction is the autophosphorylated ppk in which a phosphate is covalently linked to a histidine residue through a N-P bond.

It catalyses the reaction [phosphate](n) + ATP = [phosphate](n+1) + ADP. Catalyzes the reversible transfer of the terminal phosphate of ATP to form a long-chain polyphosphate (polyP). The chain is Polyphosphate kinase from Staphylococcus epidermidis (strain ATCC 12228 / FDA PCI 1200).